The following is a 124-amino-acid chain: Large ribosomal subunit protein uL22 (124 aa).

The protein belongs to the universal ribosomal protein uL22 family. As to quaternary structure, part of the 50S ribosomal subunit.

In terms of biological role, this protein binds specifically to 23S rRNA; its binding is stimulated by other ribosomal proteins, e.g. L4, L17, and L20. It is important during the early stages of 50S assembly. It makes multiple contacts with different domains of the 23S rRNA in the assembled 50S subunit and ribosome. Its function is as follows. The globular domain of the protein is located near the polypeptide exit tunnel on the outside of the subunit, while an extended beta-hairpin is found that lines the wall of the exit tunnel in the center of the 70S ribosome. The chain is Large ribosomal subunit protein uL22 from Synechococcus sp. (strain JA-2-3B'a(2-13)) (Cyanobacteria bacterium Yellowstone B-Prime).